A 492-amino-acid polypeptide reads, in one-letter code: GDP-Man:Man(3)GlcNAc(2)-PP-Dol alpha-1,2-mannosyltransferase (492 aa).

Residues 1 to 19 (MAAGERSWCLCKLLRFFYS) are Lumenal-facing. A helical transmembrane segment spans residues 20–40 (LFFPGLIVCGTLCVCLVIVLW). Residues 41–233 (GIRLLLQRKK…TRNPFLSKVK (193 aa)) are Cytoplasmic-facing. Residues 234-254 (LIYYYLFAFIYGLVGSCSDVV) constitute an intramembrane region (helical). The Cytoplasmic portion of the chain corresponds to 255-399 (MVNSSWTLNH…IGLHTMWNEH (145 aa)). The helical intramembrane region spans 400–420 (FGIGVVECMAAGTIILAHNSG). Residues 421 to 492 (GPKLDIVVPH…FLSSVEKLFK (72 aa)) are Cytoplasmic-facing.

Belongs to the glycosyltransferase group 1 family. Glycosyltransferase 4 subfamily.

It is found in the endoplasmic reticulum membrane. The enzyme catalyses an alpha-D-Man-(1-&gt;3)-[alpha-D-Man-(1-&gt;6)]-beta-D-Man-(1-&gt;4)-beta-D-GlcNAc-(1-&gt;4)-alpha-D-GlcNAc-diphospho-di-trans,poly-cis-dolichol + 2 GDP-alpha-D-mannose = an alpha-D-Man-(1-&gt;2)-alpha-D-Man-(1-&gt;2)-alpha-D-Man-(1-&gt;3)-[alpha-D-Man-(1-&gt;6)]-beta-D-Man-(1-&gt;4)-beta-D-GlcNAc-(1-&gt;4)-alpha-D-GlcNAc-diphospho-di-trans,poly-cis-dolichol + 2 GDP + 2 H(+). The protein operates within protein modification; protein glycosylation. GDP-Man:Man(3)GlcNAc(2)-PP-Dol alpha-1,2-mannosyltransferase that operates in the biosynthetic pathway of dolichol-linked oligosaccharides, the glycan precursors employed in protein asparagine (N)-glycosylation. The assembly of dolichol-linked oligosaccharides begins on the cytosolic side of the endoplasmic reticulum membrane and finishes in its lumen. The sequential addition of sugars to dolichol pyrophosphate produces dolichol-linked oligosaccharides containing fourteen sugars, including two GlcNAcs, nine mannoses and three glucoses. Once assembled, the oligosaccharide is transferred from the lipid to nascent proteins by oligosaccharyltransferases. Catalyzes, on the cytoplasmic face of the endoplasmic reticulum, the addition of the fourth and fifth mannose residues to the dolichol-linked oligosaccharide chain, to produce Man(5)GlcNAc(2)-PP-dolichol core oligosaccharide. Man(5)GlcNAc(2)-PP-dolichol is a substrate for ALG3, the following enzyme in the biosynthetic pathway. The protein is GDP-Man:Man(3)GlcNAc(2)-PP-Dol alpha-1,2-mannosyltransferase of Homo sapiens (Human).